Reading from the N-terminus, the 1185-residue chain is MNNSVTRLLFKRLLTLQLCHHFDIIPHRDQSFDCVQMQQPQNETANNFIPSIQLLWSTDPPQIRPDGTYPQAVELFPCFKDKWNTKEEILNIILAANADPKSNCVTVQSSPRPCSSSQFIYPRLDNAWYKNDGYIWKKRTNGKQNREDHLNLKISGHPHISAKYIHSAIVPTFHRRSYSVPDSDCHVLVHYLNVKTNNKIDDQAEEIARSMIENKVFISLSQLHDQLSPIFLQTLNVNQLVAEINEHLKKKGVNLPTSPLPQEPSSSTSRELERRNSCSSAFRKGLSSVALRRQPSANSEIDANHIGTMLKRFGCNGSSSDRISIIQPTMQNFQSIRSHQNHVAMESRSPSGDGDSRPITFEEDASYQQLSIKSSTNVSTPASAFAEKMKIRSGSQESPMGPPSSSSVTSTSLIPIIEMTPSSSSLKGGQKMLVVGGYYRKGHEYKISFGRGRMMPAVLIHAGVLSCVIPPSAKPEVVQIRVFCNGQAISTASEFTYEPQSAHLIKENDDTLVQIFEKIRIMACAFNAYSSIENIQSSSCMESLLANIVQQIDNEVSSQNLNYKTELLNGSAHFPSKTVLHLVASLDYDRLFEALIDLSRKVPACREFDIFARDNDGSTPLHTACKNSASRIARLIISIDSSAIDVVDDRGRTPVEVAPEHSIDMLSDKNNEEERVNATELWVMTNGKAFTTDKILDGKISRAPIAEKPDDLLREATSSYSIMSEMYEGPMLQAGTSRECDEDCESCCDPDSTQQLHVEIAMDTDVHVPDSPKMARLFHAVTSPGIVVPPNARARMADLARQIIEALPDRIKRNSEVSMCPDEEDPGQNHHGGVEPMFYQQASCSMSTDSPNMMDDYFDMMATETRNDIFTEPRSTETTETSASKSAQLFATHCNFFDDRSFASSSTRANTFESDTLDFDKDLGEFFTIHVDRFVDPIQQRLANLKYNDDEQRDVYEAAMVIQRAYRVYRARSTTRRQEDIERRAALKIQGCYRRYKQFCYFKKLHNAAIVVQKHFRMRKRDDKEEGAVEAVIASVPEHPTLDGQSICIQVPKTNSTMLRERAATTIQVAYRYRHRKRQAAARKIQNFMRQNRNNVNIDDGHTQHLIAENACAKRRRYVACPQTSGDQRNKRDSDGERKRDAHHDAPEFIPIGATPSSTTIPHRPTQRHHPWDQLKPPYGCGTLA.

A DNA-binding region (CG-1) is located at residues 72 to 200 (AVELFPCFKD…YLNVKTNNKI (129 aa)). Disordered regions lie at residues 252–277 (GVNLPTSPLPQEPSSSTSRELERRNS) and 390–411 (KIRSGSQESPMGPPSSSSVTST). Positions 393–411 (SGSQESPMGPPSSSSVTST) are enriched in low complexity. An IPT/TIG domain is found at 418 to 498 (EMTPSSSSLK…ISTASEFTYE (81 aa)). One copy of the ANK repeat lies at 616–646 (DGSTPLHTACKNSASRIARLIISIDSSAIDV). One can recognise an IQ domain in the interval 957-984 (EAAMVIQRAYRVYRARSTTRRQEDIERR). Residues 1121–1185 (CPQTSGDQRN…KPPYGCGTLA (65 aa)) are disordered. The segment covering 1128 to 1147 (QRNKRDSDGERKRDAHHDAP) has biased composition (basic and acidic residues).

The protein belongs to the CAMTA family. In terms of assembly, may interact with calmodulin. In terms of tissue distribution, expressed broadly in the nervous system.

Its subcellular location is the nucleus. Transcription factor. Positively modulates neuronal levels of the ubiquitous Ca2+ sensor calmodulin/cmd-1, probably by direct binding to the cmd-1 promoter, thereby regulating Ca2+ signaling, physiology, and behavior. The chain is Calmodulin-binding transcription activator homolog 1 from Caenorhabditis elegans.